The following is a 363-amino-acid chain: Carbamoyl phosphate synthase small chain (363 aa).

Residues 1–172 form a CPSase region; sequence MTKRILMLED…AFASPGDGKR (172 aa). L-glutamine-binding residues include Ser-46, Gly-220, and Gly-222. Residues 172–359 enclose the Glutamine amidotransferase type-1 domain; sequence RVVLVDYGVK…MEMMNGKEEG (188 aa). Cys-247 (nucleophile) is an active-site residue. Residues Leu-248, Gln-251, Asn-289, Gly-291, and Tyr-292 each contribute to the L-glutamine site. Active-site residues include His-332 and Glu-334.

It belongs to the CarA family. In terms of assembly, composed of two chains; the small (or glutamine) chain promotes the hydrolysis of glutamine to ammonia, which is used by the large (or ammonia) chain to synthesize carbamoyl phosphate. Tetramer of heterodimers (alpha,beta)4.

It catalyses the reaction hydrogencarbonate + L-glutamine + 2 ATP + H2O = carbamoyl phosphate + L-glutamate + 2 ADP + phosphate + 2 H(+). The catalysed reaction is L-glutamine + H2O = L-glutamate + NH4(+). The protein operates within amino-acid biosynthesis; L-arginine biosynthesis; carbamoyl phosphate from bicarbonate: step 1/1. It participates in pyrimidine metabolism; UMP biosynthesis via de novo pathway; (S)-dihydroorotate from bicarbonate: step 1/3. Small subunit of the glutamine-dependent carbamoyl phosphate synthetase (CPSase). CPSase catalyzes the formation of carbamoyl phosphate from the ammonia moiety of glutamine, carbonate, and phosphate donated by ATP, constituting the first step of 2 biosynthetic pathways, one leading to arginine and/or urea and the other to pyrimidine nucleotides. The small subunit (glutamine amidotransferase) binds and cleaves glutamine to supply the large subunit with the substrate ammonia. The chain is Carbamoyl phosphate synthase small chain from Listeria monocytogenes serovar 1/2a (strain ATCC BAA-679 / EGD-e).